The following is a 956-amino-acid chain: Netrin receptor UNC5D (956 aa).

Positions 1-30 (MGTGAADGSRGARRWLPWLGLFFWAAGAAA) are cleaved as a signal peptide. Residues 31 to 382 (ARGADGSEIL…SRRGIENASD (352 aa)) lie on the Extracellular side of the membrane. The Ig-like domain maps to 52-149 (PHFIEEPEDA…LGTSKSRKAS (98 aa)). 9 disulfides stabilise this stretch: C73–C134, C85–C132, C178–C229, C262–C299, C266–C303, C277–C289, C318–C352, C322–C357, and C330–C342. Positions 89–91 (WVH) are important for interaction with FLRT2. N-linked (GlcNAc...) asparagine glycosylation is found at N115 and N226. One can recognise an Ig-like C2-type domain in the interval 151–242 (RIAYLRKNFE…NIVAKRRSLS (92 aa)). TSP type-1 domains follow at residues 250–304 (NGGW…ALCP) and 306–358 (DGSW…GLCI). 2 N-linked (GlcNAc...) asparagine glycosylation sites follow: N351 and N379. The helical transmembrane segment at 383 to 403 (IALYSGLGAAVVAVAVLVIGV) threads the bilayer. The Cytoplasmic portion of the chain corresponds to 404–956 (TLYRRSHSDY…DFNYSRQNGL (553 aa)). The 141-residue stretch at 545 to 685 (LRTTGVFGHL…FGTYALTGEP (141 aa)) folds into the ZU5 domain. A Death domain is found at 862 to 939 (QRICATFDTP…RTHTKLSNIT (78 aa)).

This sequence belongs to the unc-5 family. Interacts (via extracellular domain) with FLRT2 and FLRT3 (via extracellular domain); the interaction is direct. Has higher affinity for FLRT2. Identified in a complex with FLRT3 and ADGRL3; does not interact with ADGRL3 by itself. Post-translationally, proteolytically cleaved by caspases during apoptosis. The cleavage does not take place when the receptor is associated with netrin ligand. Its cleavage by caspases is required to induce apoptosis. In terms of tissue distribution, detected in multipolar cells in the brain subventricular zone (at protein level). Detected in embryonic brain neocortex, especially in the subventricular zone. Detected in multipolar cells in the brain subventricular zone. Detected in brain neocortex from young pups, especially in the somatosensory cortex. Expressed in developing limb and mammary gland.

It is found in the cell membrane. Functionally, receptor for the netrin NTN4 that promotes neuronal cell survival. Plays a role in cell-cell adhesion and cell guidance. Receptor for netrin involved in cell migration. Plays a role in the regulation of neuronal cell migration in the developing brain via its interaction with FLRT2. Plays a role in axon guidance by mediating axon repulsion of neuronal growth cones in the developing nervous system upon ligand binding. May play a role in apoptosis in response to DNA damage. It also acts as a dependence receptor required for apoptosis induction when not associated with netrin ligand. Mediates cell-cell adhesion via its interaction with FLRT3 on an adjacent cell. This chain is Netrin receptor UNC5D (Unc5d), found in Mus musculus (Mouse).